Here is a 297-residue protein sequence, read N- to C-terminus: T-cell leukemia homeobox protein 1 (297 aa).

The tract at residues 153-174 is disordered; sequence DRFTGHPYQNRTPPKKKKPRTS. A DNA-binding region (homeobox) is located at residues 168 to 227; it reads KKKPRTSFTRLQICELEKRFHRQKYLASAERAALAKALKMTDAQVKTWFQNRRTKWRRQT.

It localises to the nucleus. Functionally, seems to be involved in the development of cranial sensory innervation from peripheral ganglia. This Gallus gallus (Chicken) protein is T-cell leukemia homeobox protein 1 (TLX1).